A 214-amino-acid polypeptide reads, in one-letter code: Potassium-transporting ATPase KdpC subunit (214 aa).

The helical transmembrane segment at 17-37 (LWVITALIYPFSMIAIGQILF) threads the bilayer.

This sequence belongs to the KdpC family. As to quaternary structure, the system is composed of three essential subunits: KdpA, KdpB and KdpC.

It localises to the cell inner membrane. Part of the high-affinity ATP-driven potassium transport (or Kdp) system, which catalyzes the hydrolysis of ATP coupled with the electrogenic transport of potassium into the cytoplasm. This subunit acts as a catalytic chaperone that increases the ATP-binding affinity of the ATP-hydrolyzing subunit KdpB by the formation of a transient KdpB/KdpC/ATP ternary complex. This chain is Potassium-transporting ATPase KdpC subunit, found in Microcystis aeruginosa (strain NIES-843 / IAM M-2473).